A 149-amino-acid chain; its full sequence is Nucleoside diphosphate kinase (149 aa).

Residues lysine 9, phenylalanine 57, arginine 85, threonine 91, arginine 102, and asparagine 112 each coordinate ATP. Histidine 115 (pros-phosphohistidine intermediate) is an active-site residue.

Belongs to the NDK family. As to quaternary structure, homotetramer. The cofactor is Mg(2+).

Its subcellular location is the cytoplasm. It carries out the reaction a 2'-deoxyribonucleoside 5'-diphosphate + ATP = a 2'-deoxyribonucleoside 5'-triphosphate + ADP. It catalyses the reaction a ribonucleoside 5'-diphosphate + ATP = a ribonucleoside 5'-triphosphate + ADP. Functionally, major role in the synthesis of nucleoside triphosphates other than ATP. The ATP gamma phosphate is transferred to the NDP beta phosphate via a ping-pong mechanism, using a phosphorylated active-site intermediate. The protein is Nucleoside diphosphate kinase of Microcystis aeruginosa (strain NIES-843 / IAM M-2473).